We begin with the raw amino-acid sequence, 417 residues long: Prostaglandin E2 receptor EP3 subtype (417 aa).

The Extracellular segment spans residues methionine 1–alanine 52. N-linked (GlcNAc...) asparagine glycans are attached at residues asparagine 17 and asparagine 35. A helical transmembrane segment spans residues phenylalanine 53–arginine 77. Topologically, residues arginine 78–cysteine 90 are cytoplasmic. The chain crosses the membrane as a helical span at residues isoleucine 91 to valine 111. Residues leucine 112 to threonine 130 are Extracellular-facing. Residues phenylalanine 131 to valine 152 traverse the membrane as a helical segment. Residues glutamate 153–arginine 174 are Cytoplasmic-facing. The chain crosses the membrane as a helical span at residues alanine 175–glycine 196. Topologically, residues glutamine 197–asparagine 226 are extracellular. Residue asparagine 216 is glycosylated (N-linked (GlcNAc...) asparagine). A helical transmembrane segment spans residues valine 227–isoleucine 252. At lysine 253 to glutamine 282 the chain is on the cytoplasmic side. Residues leucine 283–phenylalanine 306 traverse the membrane as a helical segment. Asparagine 307 carries an N-linked (GlcNAc...) asparagine glycan. The Extracellular segment spans residues asparagine 307–phenylalanine 326. Residues phenylalanine 327 to leucine 348 form a helical membrane-spanning segment. Residues arginine 349–glutamine 417 are Cytoplasmic-facing.

Belongs to the G-protein coupled receptor 1 family. In terms of assembly, interacts (via C-terminus) with MKLN1.

Its subcellular location is the cell membrane. Functionally, receptor for prostaglandin E2 (PGE2). The various isoforms have identical ligand binding properties but interact with different second messenger systems: isoform EP3A couples to G(i)/G(o) proteins; isoform EP3B and isoform EP3C couple to G(s), and isoform EP3D couples to G(i), G(s) and G(p). Required for normal development of fever in response to pyrinogens, including IL1B, prostaglandin E2 and bacterial lipopolysaccharide (LPS). Required for normal potentiation of platelet aggregation by prostaglandin E2, and thus plays a role in the regulation of blood coagulation. Required for increased HCO3(-) secretion in the duodenum in response to mucosal acidification, and thereby contributes to the protection of the mucosa against acid-induced ulceration. Not required for normal kidney function, normal urine volume and osmolality. This Bos taurus (Bovine) protein is Prostaglandin E2 receptor EP3 subtype (PTGER3).